The primary structure comprises 100 residues: NADH-quinone oxidoreductase subunit K (100 aa).

3 consecutive transmembrane segments (helical) span residues 4–24, 29–49, and 60–80; these read LNYG…SLLI, IFIL…FILI, and VLYI…LAIF.

This sequence belongs to the complex I subunit 4L family. NDH-1 is composed of 13 different subunits. Subunits NuoA, H, J, K, L, M, N constitute the membrane sector of the complex.

The protein localises to the cell membrane. The catalysed reaction is a quinone + NADH + 5 H(+)(in) = a quinol + NAD(+) + 4 H(+)(out). Its function is as follows. NDH-1 shuttles electrons from NADH, via FMN and iron-sulfur (Fe-S) centers, to quinones in the respiratory chain. The immediate electron acceptor for the enzyme in this species is believed to be ubiquinone. Couples the redox reaction to proton translocation (for every two electrons transferred, four hydrogen ions are translocated across the cytoplasmic membrane), and thus conserves the redox energy in a proton gradient. In Buchnera aphidicola subsp. Cinara cedri (strain Cc), this protein is NADH-quinone oxidoreductase subunit K.